The sequence spans 255 residues: MLKIGKVESYIHEKLKEEKLHFVLLDPEDVSPRLASKLAKISEEVGVDAIMVGGSTGAEGEVLDGVVKAIKENSSLPVILFPGSHGGLSKYADAVFFMSLLNSRNPFFIAGAQALGAFRVKHYGIEPIPMAYLVVEPGETAGWVSDANLIPRHKPKIAAAYALAGQYMGMRLVYLEAGSGAPEHIPNEMIKVVKSAIDVPLIVGGGIRTYEDAKEVVQSGADIIVTGTAIEKAGSLEESKKRLESIINGVKEVSP.

2 residues coordinate Mg(2+): D26 and S55. Sn-glycerol 1-phosphate contacts are provided by residues 174–180 (YLEAGSG), 205–206 (GG), and 227–228 (GT).

It belongs to the GGGP/HepGP synthase family. Group II subfamily. Requires Mg(2+) as cofactor.

Its subcellular location is the cytoplasm. The enzyme catalyses sn-glycerol 1-phosphate + (2E,6E,10E)-geranylgeranyl diphosphate = sn-3-O-(geranylgeranyl)glycerol 1-phosphate + diphosphate. It participates in membrane lipid metabolism; glycerophospholipid metabolism. Its function is as follows. Prenyltransferase that catalyzes the transfer of the geranylgeranyl moiety of geranylgeranyl diphosphate (GGPP) to the C3 hydroxyl of sn-glycerol-1-phosphate (G1P). This reaction is the first ether-bond-formation step in the biosynthesis of archaeal membrane lipids. This Thermococcus sibiricus (strain DSM 12597 / MM 739) protein is Geranylgeranylglyceryl phosphate synthase.